The primary structure comprises 159 residues: Eukaryotic translation initiation factor 5A-1 (159 aa).

Over residues 1–12 (MSDEEHHFESKA) the composition is skewed to basic and acidic residues. The segment at 1–23 (MSDEEHHFESKADAGASKTYPQQ) is disordered. At K52 the chain carries Hypusine.

Belongs to the eIF-5A family. Post-translationally, lys-52 undergoes hypusination, a unique post-translational modification that consists in the addition of a butylamino group from spermidine to lysine side chain, leading to the formation of the unusual amino acid hypusine. eIF-5As are the only known proteins to undergo this modification, which is essential for their function.

Functionally, translation factor that promotes translation elongation and termination, particularly upon ribosome stalling at specific amino acid sequence contexts. Binds between the exit (E) and peptidyl (P) site of the ribosome and promotes rescue of stalled ribosome: specifically required for efficient translation of polyproline-containing peptides as well as other motifs that stall the ribosome. Acts as a ribosome quality control (RQC) cofactor by joining the RQC complex to facilitate peptidyl transfer during CAT tailing step. This is Eukaryotic translation initiation factor 5A-1 from Solanum lycopersicum (Tomato).